We begin with the raw amino-acid sequence, 149 residues long: Transthyretin (149 aa).

The first 20 residues, 1-20, serve as a signal peptide directing secretion; that stretch reads MAFHSLLLLCLAGLAFVSET. Residue Cys32 is modified to Sulfocysteine. Lys37 is an L-thyroxine binding site. 4-carboxyglutamate is present on Glu64. Positions 76 and 139 each coordinate L-thyroxine.

This sequence belongs to the transthyretin family. Homotetramer. Dimer of dimers. In the homotetramer, subunits assemble around a central channel that can accommodate two ligand molecules. Interacts with RBP4. In terms of processing, sulfonation of the reactive cysteine Cys-32 enhances the stability of the native conformation of TTR, avoiding misassembly of the protein leading to amyloid formation.

The protein resides in the secreted. Thyroid hormone-binding protein. Probably transports thyroxine from the bloodstream to the brain. This Notamacropus eugenii (Tammar wallaby) protein is Transthyretin (TTR).